The chain runs to 1653 residues: Protein TOPAZ1 (1653 aa).

Disordered stretches follow at residues 1-94 (MRPP…TDLV), 284-303 (YSVE…KSGK), and 415-442 (ISST…SETE). Basic and acidic residues predominate over residues 63 to 78 (GREETEGDKLAKENGK). A compositionally biased stretch (basic and acidic residues) spans 423–442 (SDGHHMEKRSPRGDLRSETE).

Restricted to testis, where it localizes to germ cells.

It is found in the cytoplasm. The protein resides in the cytosol. Functionally, important for normal spermatogenesis and male fertility. Specifically required for progression to the post-meiotic stages of spermatocyte development. Seems to be necessary for normal expression levels of a number of testis-expressed gene transcripts, although its role in this process is unclear. The sequence is that of Protein TOPAZ1 from Mus musculus (Mouse).